The chain runs to 325 residues: Protein SAR DEFICIENT 4 (325 aa).

A chloroplast-targeting transit peptide spans 1-42; that stretch reads MAALPVFIPAESFPSILSHETLINHFRTNLPKHSSTITSPVR.

It belongs to the ornithine cyclodeaminase/mu-crystallin family.

It localises to the plastid. The protein localises to the chloroplast. Functionally, involved in the biosynthesis of pipecolate (Pip), a metabolite that orchestrates defense amplification, positive regulation of salicylic acid (SA) biosynthesis, and priming to guarantee effective local resistance induction and the establishment of systemic acquired resistance (SAR). Converts delta-(1)-piperideine-2-carboxylate (P2C) to Pip. Mediates reduction of P2C and biosynthesis of Pip in systemic tissue and contributes to SAR establishment. Does not possess ornithine cyclodeaminase activity in vitro. This is Protein SAR DEFICIENT 4 from Arabidopsis thaliana (Mouse-ear cress).